A 143-amino-acid chain; its full sequence is Large ribosomal subunit protein uL15 (143 aa).

2 stretches are compositionally biased toward basic residues: residues 1–14 and 23–38; these read MIRK…KRGS and KKHR…GNAG. The disordered stretch occupies residues 1-38; it reads MIRKSKKITKKRGSRTCGYGEAKKHRGAGHRGGRGNAG.

It belongs to the universal ribosomal protein uL15 family. Part of the 50S ribosomal subunit.

In terms of biological role, binds to the 23S rRNA. The protein is Large ribosomal subunit protein uL15 of Methanococcus maripaludis (strain DSM 14266 / JCM 13030 / NBRC 101832 / S2 / LL).